The following is a 141-amino-acid chain: Nucleoside diphosphate kinase (141 aa).

Positions 11, 59, 87, 93, 104, and 114 each coordinate ATP. The active-site Pros-phosphohistidine intermediate is H117.

The protein belongs to the NDK family. In terms of assembly, homotetramer. Requires Mg(2+) as cofactor.

It is found in the cytoplasm. It catalyses the reaction a 2'-deoxyribonucleoside 5'-diphosphate + ATP = a 2'-deoxyribonucleoside 5'-triphosphate + ADP. The enzyme catalyses a ribonucleoside 5'-diphosphate + ATP = a ribonucleoside 5'-triphosphate + ADP. Its function is as follows. Major role in the synthesis of nucleoside triphosphates other than ATP. The ATP gamma phosphate is transferred to the NDP beta phosphate via a ping-pong mechanism, using a phosphorylated active-site intermediate. The protein is Nucleoside diphosphate kinase of Delftia acidovorans (strain DSM 14801 / SPH-1).